We begin with the raw amino-acid sequence, 874 residues long: Alanine--tRNA ligase (874 aa).

Positions 562, 566, 664, and 668 each coordinate Zn(2+).

The protein belongs to the class-II aminoacyl-tRNA synthetase family. It depends on Zn(2+) as a cofactor.

It localises to the cytoplasm. It carries out the reaction tRNA(Ala) + L-alanine + ATP = L-alanyl-tRNA(Ala) + AMP + diphosphate. In terms of biological role, catalyzes the attachment of alanine to tRNA(Ala) in a two-step reaction: alanine is first activated by ATP to form Ala-AMP and then transferred to the acceptor end of tRNA(Ala). Also edits incorrectly charged Ser-tRNA(Ala) and Gly-tRNA(Ala) via its editing domain. This is Alanine--tRNA ligase from Neisseria meningitidis serogroup C (strain 053442).